Here is a 419-residue protein sequence, read N- to C-terminus: Large ribosomal subunit protein uL4 (419 aa).

Ala-2 is modified (N-acetylalanine). N6-acetyllysine is present on Lys-14. Arg-97 is modified (omega-N-methylarginine). Lys-106 is subject to N6-acetyllysine. Lys-239 participates in a covalent cross-link: Glycyl lysine isopeptide (Lys-Gly) (interchain with G-Cter in SUMO2). Lys-259 carries the N6-acetyllysine modification. The residue at position 266 (Thr-266) is a Phosphothreonine. Residues Ser-290 and Ser-295 each carry the phosphoserine modification. Arg-300 carries the citrulline modification. Lys-327 participates in a covalent cross-link: Glycyl lysine isopeptide (Lys-Gly) (interchain with G-Cter in SUMO2). 2 positions are modified to N6-acetyllysine: Lys-333 and Lys-353. Lys-364 is modified (N6-acetyllysine; alternate). Lys-364 is covalently cross-linked (Glycyl lysine isopeptide (Lys-Gly) (interchain with G-Cter in SUMO1); alternate). Over residues 364 to 379 (KSEKVVPEKGTADKKP) the composition is skewed to basic and acidic residues. The disordered stretch occupies residues 364–419 (KSEKVVPEKGTADKKPAVGKKGKKVDAKKQKPAGKKVVAKKPAEKKPTTEEKKPAA). The residue at position 365 (Ser-365) is a Phosphoserine. Over residues 393–402 (QKPAGKKVVA) the composition is skewed to basic residues. A compositionally biased stretch (basic and acidic residues) spans 404 to 419 (KPAEKKPTTEEKKPAA).

The protein belongs to the universal ribosomal protein uL4 family. As to quaternary structure, component of the large ribosomal subunit. May bind IPO9 with low affinity. Interacts with RBM3. Citrullinated by PADI4.

The protein resides in the cytoplasm. In terms of biological role, component of the large ribosomal subunit. The ribosome is a large ribonucleoprotein complex responsible for the synthesis of proteins in the cell. This is Large ribosomal subunit protein uL4 (Rpl4) from Mus musculus (Mouse).